The chain runs to 189 residues: DnaJ homolog subfamily C member 5G (189 aa).

The J domain maps to 17-98 (SLYAVLDLKK…KKRKIYDQHG (82 aa)). The interval 154–189 (PEQDSGRKYQQNVQSQPPRSGAKCDFRSEENSEDDF) is disordered. The segment covering 161-171 (KYQQNVQSQPP) has biased composition (polar residues).

Post-translationally, palmitoylated. In terms of tissue distribution, testis specific.

It is found in the membrane. The polypeptide is DnaJ homolog subfamily C member 5G (DNAJC5G) (Homo sapiens (Human)).